An 82-amino-acid chain; its full sequence is Delta-actitoxin-Aeq2b 2 (82 aa).

A signal peptide spans 1 to 19 (MNRLMILVFAAVFLALASA). Positions 20 to 26 (DEDVDIA) are excised as a propeptide. Cystine bridges form between cysteine 32–cysteine 79, cysteine 34–cysteine 69, and cysteine 62–cysteine 80.

The protein belongs to the sea anemone sodium channel inhibitory toxin family. Type I subfamily.

The protein localises to the secreted. It localises to the nematocyst. Binds specifically to voltage-gated sodium channels (Nav), thereby delaying their inactivation during signal transduction. Causes death to crabs. The polypeptide is Delta-actitoxin-Aeq2b 2 (Actinia equina (Beadlet anemone)).